A 124-amino-acid polypeptide reads, in one-letter code: Small ribosomal subunit protein uS12 (124 aa).

Residues 1-29 are disordered; it reads MPTINQLVRRPRRPRESANKAPALQHNPQ. A 3-methylthioaspartic acid modification is found at D90.

The protein belongs to the universal ribosomal protein uS12 family. As to quaternary structure, part of the 30S ribosomal subunit. Contacts proteins S8 and S17. May interact with IF1 in the 30S initiation complex.

In terms of biological role, with S4 and S5 plays an important role in translational accuracy. Functionally, interacts with and stabilizes bases of the 16S rRNA that are involved in tRNA selection in the A site and with the mRNA backbone. Located at the interface of the 30S and 50S subunits, it traverses the body of the 30S subunit contacting proteins on the other side and probably holding the rRNA structure together. The combined cluster of proteins S8, S12 and S17 appears to hold together the shoulder and platform of the 30S subunit. In Anaplasma marginale (strain Florida), this protein is Small ribosomal subunit protein uS12.